Reading from the N-terminus, the 334-residue chain is Probable type II restriction enzyme HindVP (334 aa).

The catalysed reaction is Endonucleolytic cleavage of DNA to give specific double-stranded fragments with terminal 5'-phosphates.. Functionally, a P subtype restriction enzyme that recognizes the double-stranded sequence 5'-GRCGYC-3'; the cleavage site is unknown. The polypeptide is Probable type II restriction enzyme HindVP (hindVRP) (Haemophilus influenzae (strain ATCC 51907 / DSM 11121 / KW20 / Rd)).